The following is a 165-amino-acid chain: Protein NKG7 (165 aa).

4 consecutive transmembrane segments (helical) span residues Leu9–Phe29, Phe61–Phe81, Leu92–Tyr112, and Phe133–Ala153.

The protein belongs to the PMP-22/EMP/MP20 family. As to expression, expressed in activated T-cells, in kidney, liver, lung and pancreas. Not expressed in brain, heart, or skeletal muscle. Expressed at high levels in TCR gamma delta-expressing CTL clones, and in some TCR alpha beta-expressing CTL clones (both CD4+ and CD8+), but is not expressed in other TCR alpha beta-expressing CTL clones and in cell lines representing B-cells, monocytes, and myeloid cells.

The protein localises to the cell membrane. It is found in the cytolytic granule membrane. Regulates cytotoxic granule exocytosis in effector lymphocytes, thus acting as a critical mediator of inflammation in a broad range of infectious and non-infectious diseases. Essential for cytotoxic degranulation of natural killer (NK) cells and CD8(+) T-cells and for the activation of CD4(+) T-cells following infection. Plays a critical role in CD8(+) T-cell and NK cell-mediated cytolysis of target cells and contributes to the cytolytic activity via the perforin/granzyme pathway by enhancing exocytosis of LAMP1-carrying lytic granules. Contributes to NK cell-mediated control of cancer metastasis. This chain is Protein NKG7 (NKG7), found in Homo sapiens (Human).